The sequence spans 475 residues: Membrane-bound lytic murein transglycosylase F (475 aa).

A signal peptide spans Met1 to Ala15. The interval Ala16 to Val258 is non-LT domain. Positions Lys259–Pro475 are LT domain. Glu303 is a catalytic residue.

The protein in the N-terminal section; belongs to the bacterial solute-binding protein 3 family. This sequence in the C-terminal section; belongs to the transglycosylase Slt family.

The protein localises to the cell outer membrane. It catalyses the reaction Exolytic cleavage of the (1-&gt;4)-beta-glycosidic linkage between N-acetylmuramic acid (MurNAc) and N-acetylglucosamine (GlcNAc) residues in peptidoglycan, from either the reducing or the non-reducing ends of the peptidoglycan chains, with concomitant formation of a 1,6-anhydrobond in the MurNAc residue.. Functionally, murein-degrading enzyme that degrades murein glycan strands and insoluble, high-molecular weight murein sacculi, with the concomitant formation of a 1,6-anhydromuramoyl product. Lytic transglycosylases (LTs) play an integral role in the metabolism of the peptidoglycan (PG) sacculus. Their lytic action creates space within the PG sacculus to allow for its expansion as well as for the insertion of various structures such as secretion systems and flagella. In Shewanella halifaxensis (strain HAW-EB4), this protein is Membrane-bound lytic murein transglycosylase F.